Consider the following 825-residue polypeptide: Zygotic DNA replication licensing factor mcm6-B (825 aa).

A C4-type zinc finger spans residues cysteine 159–cysteine 186. In terms of domain architecture, MCM spans leucine 347–valine 554. Residue glycine 397 to serine 404 coordinates ATP. The short motif at serine 529–aspartate 532 is the Arginine finger element. Positions aspartate 668–glutamine 679 are enriched in acidic residues. The interval aspartate 668–asparagine 690 is disordered.

This sequence belongs to the MCM family. As to quaternary structure, component of the mcm2-7 complex (RLF-M). The complex forms a toroidal hexameric ring with the proposed subunit order mcm2-mcm6-mcm4-mcm7-mcm3-mcm5 (By simililarity). Begins to associate with zmcm3, mcm4 and mcm7 into mcm complexes at the neurula stage.

It is found in the nucleus. It carries out the reaction ATP + H2O = ADP + phosphate + H(+). Functionally, acts as a component of the mcm2-7 complex (mcm complex) which is the putative replicative helicase essential for 'once per cell cycle' DNA replication initiation and elongation in eukaryotic cells. The active ATPase sites in the mcm2-7 ring are formed through the interaction surfaces of two neighboring subunits such that a critical structure of a conserved arginine finger motif is provided in trans relative to the ATP-binding site of the Walker A box of the adjacent subunit. The six ATPase active sites, however, are likely to contribute differentially to the complex helicase activity. The existence of maternal and zygotic forms of mcm3 and mcm6 suggests that specific forms of mcm2-7 complexes may be used during different stages of development. May replace mmcm6 in the mcm2-7 complex. This Xenopus laevis (African clawed frog) protein is Zygotic DNA replication licensing factor mcm6-B (zmcm6-b).